A 90-amino-acid polypeptide reads, in one-letter code: Cell division topological specificity factor (90 aa).

The interval 1-21 is disordered; that stretch reads MAGFWSKLFSSEEKPSSAQTA. A compositionally biased stretch (basic and acidic residues) spans 10–21; that stretch reads SSEEKPSSAQTA.

Belongs to the MinE family.

Prevents the cell division inhibition by proteins MinC and MinD at internal division sites while permitting inhibition at polar sites. This ensures cell division at the proper site by restricting the formation of a division septum at the midpoint of the long axis of the cell. This Acinetobacter baumannii (strain AB307-0294) protein is Cell division topological specificity factor.